The sequence spans 358 residues: Dihydroorotate dehydrogenase (quinone) (358 aa).

Residues 61-65 (AGFDK) and Gly85 contribute to the FMN site. Position 65 (Lys65) interacts with substrate. Position 110-114 (110-114 (NRFGL)) interacts with substrate. Positions 139 and 170 each coordinate FMN. Asn170 contributes to the substrate binding site. Ser173 acts as the Nucleophile in catalysis. A substrate-binding site is contributed by Asn175. Residues Lys211 and Ser239 each contribute to the FMN site. Residue 240–241 (NT) coordinates substrate. FMN contacts are provided by residues Gly263, Gly292, and 313–314 (YS).

This sequence belongs to the dihydroorotate dehydrogenase family. Type 2 subfamily. Monomer. Requires FMN as cofactor.

The protein resides in the cell membrane. It carries out the reaction (S)-dihydroorotate + a quinone = orotate + a quinol. The protein operates within pyrimidine metabolism; UMP biosynthesis via de novo pathway; orotate from (S)-dihydroorotate (quinone route): step 1/1. In terms of biological role, catalyzes the conversion of dihydroorotate to orotate with quinone as electron acceptor. This chain is Dihydroorotate dehydrogenase (quinone), found in Methylorubrum extorquens (strain CM4 / NCIMB 13688) (Methylobacterium extorquens).